Consider the following 346-residue polypeptide: Nitrilase 3 (346 aa).

Serine 2 carries the post-translational modification N-acetylserine. Residues 25–297 enclose the CN hydrolase domain; the sequence is VRVTIVQSST…EGLVTADLDL (273 aa). Catalysis depends on glutamate 65, which acts as the Proton acceptor. The active-site Proton donor is the lysine 152. Cysteine 186 (nucleophile) is an active-site residue.

The protein belongs to the carbon-nitrogen hydrolase superfamily. Nitrilase family.

The protein localises to the cell membrane. The enzyme catalyses a nitrile + 2 H2O = a carboxylate + NH4(+). Functionally, can convert indole-3-acetonitrile to the plant hormone indole-3-acetic acid. This Arabidopsis thaliana (Mouse-ear cress) protein is Nitrilase 3 (NIT3).